We begin with the raw amino-acid sequence, 543 residues long: Formate--tetrahydrofolate ligase (543 aa).

ATP is bound at residue 54 to 61 (TPAGEGKT).

The protein belongs to the formate--tetrahydrofolate ligase family.

The catalysed reaction is (6S)-5,6,7,8-tetrahydrofolate + formate + ATP = (6R)-10-formyltetrahydrofolate + ADP + phosphate. It functions in the pathway one-carbon metabolism; tetrahydrofolate interconversion. The protein is Formate--tetrahydrofolate ligase of Thermus thermophilus (strain ATCC BAA-163 / DSM 7039 / HB27).